Consider the following 462-residue polypeptide: GTPase Der (462 aa).

EngA-type G domains follow at residues 9-171 (KTIA…NLNQ) and 201-372 (IQVG…ECFS). GTP contacts are provided by residues 15–22 (GQPNVGKS), 62–66 (DTGGM), 123–126 (NKID), 207–214 (GRVNVGKS), 254–258 (DTAGI), and 318–321 (NKWD). Residues 373-457 (KRIPTSLLNS…PLILNAKDKK (85 aa)) form the KH-like domain.

This sequence belongs to the TRAFAC class TrmE-Era-EngA-EngB-Septin-like GTPase superfamily. EngA (Der) GTPase family. As to quaternary structure, associates with the 50S ribosomal subunit.

In terms of biological role, GTPase that plays an essential role in the late steps of ribosome biogenesis. The protein is GTPase Der of Helicobacter pylori (strain P12).